A 158-amino-acid polypeptide reads, in one-letter code: Small ribosomal subunit protein uS9 (158 aa).

Belongs to the universal ribosomal protein uS9 family.

The protein is Small ribosomal subunit protein uS9 of Brucella melitensis biotype 1 (strain ATCC 23456 / CCUG 17765 / NCTC 10094 / 16M).